A 285-amino-acid polypeptide reads, in one-letter code: Aldo-keto reductase (285 aa).

165–175 (APLAGGILTGK) provides a ligand contact to NADP(+).

Belongs to the aldo/keto reductase family. Aldo/keto reductase 2 subfamily.

This is Aldo-keto reductase from Babesia bovis.